Consider the following 316-residue polypeptide: Apolipoprotein E (316 aa).

Residues 1-18 (MKVLWVALVVALLAGCQA) form the signal peptide. 8 tandem repeats follow at residues 79–100 (VLMEETMKEVKAYREELEGQLA), 101–122 (PMAQETQARVSKELQAAQARLG), 123–144 (SDMEDLRNRLAQYRSEVQAMLG), 145–166 (QSTEELRARMASHLRKLRKRLL), 167–188 (RDADDLKKRLAVYQAGASEGAE), 189–210 (RSVSAIRERLRPLVEQGQSRAA), 211–232 (TLSTQAAQPLLDRAEAWRQKLH), and 233–254 (GRLEEVGVRAQDRLDKMRQQLE). The interval 79 to 254 (VLMEETMKEV…RLDKMRQQLE (176 aa)) is 8 X 22 AA approximate tandem repeats. Residue Met142 is modified to Methionine sulfoxide. The residue at position 146 (Ser146) is a Phosphoserine. The segment at 157-167 (HLRKLRKRLLR) is LDL and other lipoprotein receptors binding. 161–164 (LRKR) is a binding site for heparin. Residues 209-289 (AATLSTQAAQ…SWFEPLVGDM (81 aa)) form a lipid-binding and lipoprotein association region. O-linked (GalNAc...) threonine glycosylation occurs at Thr211. 228-235 (RQKLHGRL) contributes to the heparin binding site. A homooligomerization region spans residues 265-316 (SQIRLQAEAFQARLRSWFEPLVGDMQRQWAGLVEKVQLALHLSPTSPPSENH). Residues 277 to 289 (RLRSWFEPLVGDM) form a specificity for association with VLDL region.

It belongs to the apolipoprotein A1/A4/E family. In terms of assembly, homotetramer. May interact with ABCA1; functionally associated with ABCA1 in the biogenesis of HDLs. May interact with APP/A4 amyloid-beta peptide; the interaction is extremely stable in vitro but its physiological significance is unclear. May interact with MAPT. May interact with MAP2. In the cerebrospinal fluid, interacts with secreted SORL1. Interacts with PMEL; this allows the loading of PMEL luminal fragment on ILVs to induce fibril nucleation. Post-translationally, APOE exists as multiple glycosylated and sialylated glycoforms within cells and in plasma. The extent of glycosylation and sialylation are tissue and context specific. In terms of processing, glycated in plasma VLDL. Phosphorylated by FAM20C in the extracellular medium.

It is found in the secreted. It localises to the extracellular space. The protein localises to the extracellular matrix. Its subcellular location is the extracellular vesicle. The protein resides in the endosome. It is found in the multivesicular body. Its function is as follows. APOE is an apolipoprotein, a protein associating with lipid particles, that mainly functions in lipoprotein-mediated lipid transport between organs via the plasma and interstitial fluids. APOE is a core component of plasma lipoproteins and is involved in their production, conversion and clearance. Apolipoproteins are amphipathic molecules that interact both with lipids of the lipoprotein particle core and the aqueous environment of the plasma. As such, APOE associates with chylomicrons, chylomicron remnants, very low density lipoproteins (VLDL) and intermediate density lipoproteins (IDL) but shows a preferential binding to high-density lipoproteins (HDL). It also binds a wide range of cellular receptors including the LDL receptor/LDLR and the very low-density lipoprotein receptor/VLDLR that mediate the cellular uptake of the APOE-containing lipoprotein particles. Finally, APOE also has a heparin-binding activity and binds heparan-sulfate proteoglycans on the surface of cells, a property that supports the capture and the receptor-mediated uptake of APOE-containing lipoproteins by cells. This Capra hircus aegagrus (Wild goat) protein is Apolipoprotein E (APOE).